We begin with the raw amino-acid sequence, 278 residues long: Sulfide dehydrogenase subunit beta (278 aa).

Residues 1 to 4 (MFKI) constitute a propeptide that is removed on maturation. An FAD-binding FR-type domain is found at 1 to 95 (MFKILRKERL…LGPLGKPSHI (95 aa)). [2Fe-2S] cluster contacts are provided by Cys-222, Cys-225, and Cys-237.

In terms of assembly, heterodimer of alpha and beta subunits. The cofactor is FAD. Requires [2Fe-2S] cluster as cofactor.

The protein resides in the cytoplasm. The catalysed reaction is n sulfur + hydrogen sulfide + NADP(+) = (n+1) sulfur + NADPH. It catalyses the reaction 2 reduced [2Fe-2S]-[ferredoxin] + NADP(+) + H(+) = 2 oxidized [2Fe-2S]-[ferredoxin] + NADPH. Functionally, a bifunctional enzyme that catalyzes the reduction of elemental sulfur or polysulfide to hydrogen sulfide with NADPH as electron donor. Also functions as a reduced ferredoxin:NADP oxidoreductase with a very high affinity for reduced ferredoxin. Exhibits a broad specificity for various physiological and non-physiological substrates with varied reduction potentials such as methyl viologen, benzyl viologen, FAD, FMN, methylene blue, 2,6-dichlorophenolindophenol (DCIP), cytochrome C and ferricyanide with highest preference for benzyl viologen. Does not reduce fumarate, succinate, nitrate, nitrite, sulfate, sulfite or protons. Does not possess any hydrogenase activity or NADPH-dependent glutamate synthase activity. The protein is Sulfide dehydrogenase subunit beta of Pyrococcus furiosus (strain ATCC 43587 / DSM 3638 / JCM 8422 / Vc1).